The following is a 235-amino-acid chain: NAD(P)H-hydrate epimerase (235 aa).

The YjeF N-terminal domain occupies 18 to 221 (AAQIDEQLFT…SLVDEHELLM (204 aa)). Residue 65 to 69 (NNGGD) participates in (6S)-NADPHX binding. Residues asparagine 66 and aspartate 127 each contribute to the K(+) site. (6S)-NADPHX-binding positions include 131 to 137 (GFSFHPP) and aspartate 160. Serine 163 contacts K(+).

The protein belongs to the NnrE/AIBP family. K(+) is required as a cofactor.

The enzyme catalyses (6R)-NADHX = (6S)-NADHX. The catalysed reaction is (6R)-NADPHX = (6S)-NADPHX. Functionally, catalyzes the epimerization of the S- and R-forms of NAD(P)HX, a damaged form of NAD(P)H that is a result of enzymatic or heat-dependent hydration. This is a prerequisite for the S-specific NAD(P)H-hydrate dehydratase to allow the repair of both epimers of NAD(P)HX. This Caenorhabditis elegans protein is NAD(P)H-hydrate epimerase.